Consider the following 476-residue polypeptide: 3-isopropylmalate dehydratase large subunit (476 aa).

Residues Cys357, Cys417, and Cys420 each contribute to the [4Fe-4S] cluster site.

The protein belongs to the aconitase/IPM isomerase family. LeuC type 1 subfamily. Heterodimer of LeuC and LeuD. The cofactor is [4Fe-4S] cluster.

The enzyme catalyses (2R,3S)-3-isopropylmalate = (2S)-2-isopropylmalate. The protein operates within amino-acid biosynthesis; L-leucine biosynthesis; L-leucine from 3-methyl-2-oxobutanoate: step 2/4. Catalyzes the isomerization between 2-isopropylmalate and 3-isopropylmalate, via the formation of 2-isopropylmaleate. The sequence is that of 3-isopropylmalate dehydratase large subunit from Mycobacterium leprae (strain TN).